We begin with the raw amino-acid sequence, 145 residues long: uncharacterized protein (145 aa).

Belongs to the SAP18 family.

The protein resides in the cytoplasm. The protein localises to the nucleus. This is an uncharacterized protein from Schizosaccharomyces pombe (strain 972 / ATCC 24843) (Fission yeast).